The sequence spans 798 residues: ATP-dependent RNA helicase bel (798 aa).

Residues 16-248 are disordered; the sequence is VAGLDLNGGS…SRWKEGGGSN (233 aa). Polar residues predominate over residues 31 to 42; that stretch reads PITSKTSTNSVT. Composition is skewed to gly residues over residues 94–110, 118–132, and 154–178; these read RGGGGEYRRGGGGGGRG, YGYGSGGGGRRGGGG, and SGGGGGGGRGFGRGPSYRGGGGGSG. Ser177 and Ser179 each carry phosphoserine. The span at 198 to 209 shows a compositional bias: basic and acidic residues; sequence RNDRWQEPERPA. Phosphoserine is present on residues Ser214 and Ser219. The Q motif motif lies at 295-323; that stretch reads TSFDDVQLTEIIRNNVALARYDKPTPVQK. Residues 315–322 and 339–346 each bind ATP; these read YDKPTPVQ and AQTGSGKT. One can recognise a Helicase ATP-binding domain in the interval 326–515; that stretch reads IPIIINGRDL…SDFLSNYIFL (190 aa). The DEAD box signature appears at 459–462; sequence DEAD. The Helicase C-terminal domain occupies 542–693; it reads YLLDLLSSIR…EIPSFMEDMS (152 aa). Position 638 is a phosphoserine (Ser638). Disordered stretches follow at residues 689–765 and 778–798; these read MEDM…SGGG and GGSYGGGSASHSSNAPDWWAQ. Gly residues-rich tracts occupy residues 706–717 and 740–750; these read RGGGGRYGGGFG and GGSGSGGGGGS.

This sequence belongs to the DEAD box helicase family. DDX3/DED1 subfamily. As to expression, vas and bel colocalize in nuage (perinuclear, electron-dense granules in germline cells) and at the oocyte posterior during oogenesis.

The protein localises to the cytoplasm. It catalyses the reaction ATP + H2O = ADP + phosphate + H(+). Its function is as follows. ATP-dependent RNA helicase that is essential and required for cellular function, larval growth, and for male and female fertility. Also required for RNA interference (RNAi), double-stranded RNA induces potent and specific gene silencing, by acting downstream of dsRNA internalization. RNAi is mediated by the RNA-induced silencing complex (RISC), a sequence-specific, multicomponent nuclease that destroys or silences messenger RNAs homologous to the silencing trigger. This chain is ATP-dependent RNA helicase bel, found in Drosophila melanogaster (Fruit fly).